Here is a 418-residue protein sequence, read N- to C-terminus: Serine hydroxymethyltransferase (418 aa).

(6S)-5,6,7,8-tetrahydrofolate-binding positions include leucine 121 and 125–127; that span reads GHL. At lysine 230 the chain carries N6-(pyridoxal phosphate)lysine. 356–358 serves as a coordination point for (6S)-5,6,7,8-tetrahydrofolate; it reads SPF.

It belongs to the SHMT family. As to quaternary structure, homodimer. Pyridoxal 5'-phosphate is required as a cofactor.

The protein localises to the cytoplasm. It carries out the reaction (6R)-5,10-methylene-5,6,7,8-tetrahydrofolate + glycine + H2O = (6S)-5,6,7,8-tetrahydrofolate + L-serine. It participates in one-carbon metabolism; tetrahydrofolate interconversion. Its pathway is amino-acid biosynthesis; glycine biosynthesis; glycine from L-serine: step 1/1. Catalyzes the reversible interconversion of serine and glycine with tetrahydrofolate (THF) serving as the one-carbon carrier. This reaction serves as the major source of one-carbon groups required for the biosynthesis of purines, thymidylate, methionine, and other important biomolecules. Also exhibits THF-independent aldolase activity toward beta-hydroxyamino acids, producing glycine and aldehydes, via a retro-aldol mechanism. This is Serine hydroxymethyltransferase from Idiomarina loihiensis (strain ATCC BAA-735 / DSM 15497 / L2-TR).